The chain runs to 71 residues: Small ribosomal subunit protein bS21 (71 aa).

The protein belongs to the bacterial ribosomal protein bS21 family.

The polypeptide is Small ribosomal subunit protein bS21 (Chromohalobacter salexigens (strain ATCC BAA-138 / DSM 3043 / CIP 106854 / NCIMB 13768 / 1H11)).